The primary structure comprises 415 residues: 3-isopropylmalate dehydratase large subunit (415 aa).

[4Fe-4S] cluster is bound by residues Cys297, Cys355, and Cys358.

It belongs to the aconitase/IPM isomerase family. LeuC type 2 subfamily. As to quaternary structure, heterodimer of LeuC and LeuD. [4Fe-4S] cluster is required as a cofactor.

It carries out the reaction (2R,3S)-3-isopropylmalate = (2S)-2-isopropylmalate. It participates in amino-acid biosynthesis; L-leucine biosynthesis; L-leucine from 3-methyl-2-oxobutanoate: step 2/4. Functionally, catalyzes the isomerization between 2-isopropylmalate and 3-isopropylmalate, via the formation of 2-isopropylmaleate. This is 3-isopropylmalate dehydratase large subunit from Sulfurisphaera tokodaii (strain DSM 16993 / JCM 10545 / NBRC 100140 / 7) (Sulfolobus tokodaii).